The sequence spans 388 residues: Chorismate synthase (388 aa).

The NADP(+) site is built by Arg-39 and Arg-45. Residues 130 to 132, 251 to 252, Gly-296, 311 to 315, and Arg-337 each bind FMN; these read RSS, NA, and KPIPT.

This sequence belongs to the chorismate synthase family. Homotetramer. It depends on FMNH2 as a cofactor.

It carries out the reaction 5-O-(1-carboxyvinyl)-3-phosphoshikimate = chorismate + phosphate. It functions in the pathway metabolic intermediate biosynthesis; chorismate biosynthesis; chorismate from D-erythrose 4-phosphate and phosphoenolpyruvate: step 7/7. In terms of biological role, catalyzes the anti-1,4-elimination of the C-3 phosphate and the C-6 proR hydrogen from 5-enolpyruvylshikimate-3-phosphate (EPSP) to yield chorismate, which is the branch point compound that serves as the starting substrate for the three terminal pathways of aromatic amino acid biosynthesis. This reaction introduces a second double bond into the aromatic ring system. The protein is Chorismate synthase of Streptococcus agalactiae serotype V (strain ATCC BAA-611 / 2603 V/R).